The primary structure comprises 291 residues: HTH-type transcriptional regulator DgcR (291 aa).

The HTH lysR-type domain occupies M1 to T58. The H-T-H motif DNA-binding region spans I18 to S37.

The protein belongs to the LysR transcriptional regulatory family.

Its function is as follows. Transcriptional regulator that positively regulates the expression of the D-Glu gene cluster (DGC). The cluster includes dgcN and dgcA, which are involved in a deamination-independent D-glutamate degradation pathway, dgcR itself, dgcT, dgcP and dgcH. Acts by binding the consensus sequence upstream of dgcR, dgcT, dgcP and dgcH. This chain is HTH-type transcriptional regulator DgcR, found in Pseudoalteromonas sp.